The primary structure comprises 143 residues: Large ribosomal subunit protein uL13 (143 aa).

It belongs to the universal ribosomal protein uL13 family. Part of the 50S ribosomal subunit.

In terms of biological role, this protein is one of the early assembly proteins of the 50S ribosomal subunit, although it is not seen to bind rRNA by itself. It is important during the early stages of 50S assembly. The chain is Large ribosomal subunit protein uL13 from Alkaliphilus oremlandii (strain OhILAs) (Clostridium oremlandii (strain OhILAs)).